A 140-amino-acid polypeptide reads, in one-letter code: Mediator of RNA polymerase II transcription subunit 21 (140 aa).

Residues 52 to 130 (EERERTLEEL…CDELILKLAQ (79 aa)) adopt a coiled-coil conformation.

The protein belongs to the Mediator complex subunit 21 family. As to quaternary structure, component of the Mediator complex.

It localises to the nucleus. In terms of biological role, component of the Mediator complex, a coactivator involved in the regulated transcription of nearly all RNA polymerase II-dependent genes. Mediator functions as a bridge to convey information from gene-specific regulatory proteins to the basal RNA polymerase II transcription machinery. Mediator is recruited to promoters by direct interactions with regulatory proteins and serves as a scaffold for the assembly of a functional preinitiation complex with RNA polymerase II and the general transcription factors. The chain is Mediator of RNA polymerase II transcription subunit 21 (SRB7) from Yarrowia lipolytica (strain CLIB 122 / E 150) (Yeast).